The primary structure comprises 350 residues: C5a anaphylatoxin chemotactic receptor 1 (350 aa).

The Extracellular portion of the chain corresponds to 1–37 (MDSFDYTTPDYGHYDDKDTLDLNTPVDKTSNTLRVPD). A required for CHIPS binding region spans residues 10-18 (DYGHYDDKD). Sulfotyrosine occurs at positions 11 and 14. The interval 21–30 (DLNTPVDKTS) is involved in C5a binding. The chain crosses the membrane as a helical span at residues 38–64 (ILALVIFAVVFLVGVLGNALVVWVTAF). Topologically, residues 65–69 (EAKRT) are cytoplasmic. The chain crosses the membrane as a helical span at residues 70-93 (INAIWFLNLAVADFLSCLALPILF). Residues 94-110 (TSIVQHHHWPFGGAACS) are Extracellular-facing. Residues Cys109 and Cys188 are joined by a disulfide bond. The helical transmembrane segment at 111-132 (ILPSLILLNMYASILLLATISA) threads the bilayer. Residues 133 to 153 (DRFLLVFKPIWCQNFRGAGLA) are Cytoplasmic-facing. The chain crosses the membrane as a helical span at residues 154–174 (WIACAVAWGLALLLTIPSFLY). Residues 175–200 (RVVREEYFPPKVLCGVDYSHDKRRER) are Extracellular-facing. A helical membrane pass occupies residues 201-226 (AVAIVRLVLGFLWPLLTLMICYTFIL). Residues 227 to 242 (LRTWSRRATRSTKTLK) lie on the Cytoplasmic side of the membrane. A helical membrane pass occupies residues 243–265 (VVVAVVASFFIFWLPYQVTGIMM). The Extracellular portion of the chain corresponds to 266–282 (SFLEPSSPTFRLLKKLD). The chain crosses the membrane as a helical span at residues 283–303 (SLCVSFAYINCCINPIIYVVA). Residues 304 to 350 (GQGFQGRLQKSLPSLLRNVLTEESVVRESKSFARSTVDTMADKTQAV) lie on the Cytoplasmic side of the membrane. Phosphoserine occurs at positions 314, 317, 327, 332, 334, and 338.

This sequence belongs to the G-protein coupled receptor 1 family. In terms of assembly, homodimer. May also form higher-order oligomers. Interacts (when phosphorylated) with ARRB1 and ARRB2; the interaction is associated with internalization of C5aR. Interacts (via N-terminal domain) with S.aureus chemotaxis inhibitory protein (CHIPS); the interaction blocks the receptor and may thus inhibit the immune response. In terms of processing, sulfation plays a critical role in the association of C5aR with C5a, but no significant role in the ability of the receptor to transduce a signal and mobilize calcium in response to a small peptide agonist. Sulfation at Tyr-14 is important for CHIPS binding. Post-translationally, phosphorylated on serine residues in response to C5a binding, resulting in internalization of the receptor and short-term desensitization to C5a.

The protein resides in the cell membrane. It is found in the cytoplasmic vesicle. Functionally, receptor for the chemotactic and inflammatory peptide anaphylatoxin C5a. The ligand interacts with at least two sites on the receptor: a high-affinity site on the extracellular N-terminus, and a second site in the transmembrane region which activates downstream signaling events. Receptor activation stimulates chemotaxis, granule enzyme release, intracellular calcium release and superoxide anion production. The polypeptide is C5a anaphylatoxin chemotactic receptor 1 (C5AR1) (Pan troglodytes (Chimpanzee)).